We begin with the raw amino-acid sequence, 158 residues long: Transcription elongation factor GreA (158 aa).

Residues 53–73 (EQQSFVEGRIQEIEGKLSNAQ) adopt a coiled-coil conformation.

This sequence belongs to the GreA/GreB family.

Its function is as follows. Necessary for efficient RNA polymerase transcription elongation past template-encoded arresting sites. The arresting sites in DNA have the property of trapping a certain fraction of elongating RNA polymerases that pass through, resulting in locked ternary complexes. Cleavage of the nascent transcript by cleavage factors such as GreA or GreB allows the resumption of elongation from the new 3'terminus. GreA releases sequences of 2 to 3 nucleotides. The polypeptide is Transcription elongation factor GreA (Alkalilimnicola ehrlichii (strain ATCC BAA-1101 / DSM 17681 / MLHE-1)).